We begin with the raw amino-acid sequence, 386 residues long: Lipoyl synthase, mitochondrial (386 aa).

Residues 1–48 are disordered; the sequence is MHGRRHLAASLTRALTQAPSRSISSTPSLLQTLDPSVPSPSPPPAAEP. Positions 13-34 are enriched in polar residues; it reads RALTQAPSRSISSTPSLLQTLD. The segment covering 37–46 has biased composition (pro residues); that stretch reads VPSPSPPPAA. Residues Cys-113, Cys-118, Cys-124, Cys-144, Cys-148, Cys-151, and Ser-360 each coordinate [4Fe-4S] cluster. The 221-residue stretch at 129 to 349 folds into the Radical SAM core domain; sequence ETGTATATIM…RALGVEMGFR (221 aa).

It belongs to the radical SAM superfamily. Lipoyl synthase family. [4Fe-4S] cluster is required as a cofactor.

Its subcellular location is the mitochondrion. The catalysed reaction is [[Fe-S] cluster scaffold protein carrying a second [4Fe-4S](2+) cluster] + N(6)-octanoyl-L-lysyl-[protein] + 2 oxidized [2Fe-2S]-[ferredoxin] + 2 S-adenosyl-L-methionine + 4 H(+) = [[Fe-S] cluster scaffold protein] + N(6)-[(R)-dihydrolipoyl]-L-lysyl-[protein] + 4 Fe(3+) + 2 hydrogen sulfide + 2 5'-deoxyadenosine + 2 L-methionine + 2 reduced [2Fe-2S]-[ferredoxin]. It functions in the pathway protein modification; protein lipoylation via endogenous pathway; protein N(6)-(lipoyl)lysine from octanoyl-[acyl-carrier-protein]: step 2/2. In terms of biological role, catalyzes the radical-mediated insertion of two sulfur atoms into the C-6 and C-8 positions of the octanoyl moiety bound to the lipoyl domains of lipoate-dependent enzymes, thereby converting the octanoylated domains into lipoylated derivatives. This is Lipoyl synthase, mitochondrial from Sorghum bicolor (Sorghum).